The chain runs to 418 residues: UDP-N-acetylglucosamine 1-carboxyvinyltransferase 1 (418 aa).

Residue 22 to 23 (KN) coordinates phosphoenolpyruvate. A UDP-N-acetyl-alpha-D-glucosamine-binding site is contributed by arginine 94. The active-site Proton donor is the cysteine 118. Cysteine 118 carries the post-translational modification 2-(S-cysteinyl)pyruvic acid O-phosphothioketal. UDP-N-acetyl-alpha-D-glucosamine is bound by residues 123 to 127 (RPIDL), aspartate 306, and isoleucine 328.

Belongs to the EPSP synthase family. MurA subfamily.

Its subcellular location is the cytoplasm. The catalysed reaction is phosphoenolpyruvate + UDP-N-acetyl-alpha-D-glucosamine = UDP-N-acetyl-3-O-(1-carboxyvinyl)-alpha-D-glucosamine + phosphate. The protein operates within cell wall biogenesis; peptidoglycan biosynthesis. Functionally, cell wall formation. Adds enolpyruvyl to UDP-N-acetylglucosamine. The sequence is that of UDP-N-acetylglucosamine 1-carboxyvinyltransferase 1 from Clostridium acetobutylicum (strain ATCC 824 / DSM 792 / JCM 1419 / IAM 19013 / LMG 5710 / NBRC 13948 / NRRL B-527 / VKM B-1787 / 2291 / W).